A 438-amino-acid polypeptide reads, in one-letter code: Adenylyltransferase and sulfurtransferase UBA4 (438 aa).

Residues glycine 81, aspartate 102, 109–113 (SNLHR), lysine 126, and 170–171 (DH) contribute to the ATP site. Zn(2+)-binding residues include cysteine 212 and cysteine 215. Cysteine 229 functions as the Glycyl thioester intermediate; for adenylyltransferase activity in the catalytic mechanism. Zn(2+) contacts are provided by cysteine 290 and cysteine 293. The Rhodanese domain maps to 340–436 (NKKKHILIDV…WSDDVDSKIP (97 aa)). Cysteine 396 (cysteine persulfide intermediate; for sulfurtransferase activity) is an active-site residue.

This sequence in the N-terminal section; belongs to the HesA/MoeB/ThiF family. UBA4 subfamily. The cofactor is Zn(2+).

It localises to the cytoplasm. Its subcellular location is the cytosol. It functions in the pathway tRNA modification; 5-methoxycarbonylmethyl-2-thiouridine-tRNA biosynthesis. Its function is as follows. Plays a central role in 2-thiolation of mcm(5)S(2)U at tRNA wobble positions of cytosolic tRNA(Lys), tRNA(Glu) and tRNA(Gln). Acts by mediating the C-terminal thiocarboxylation of sulfur carrier URM1. Its N-terminus first activates URM1 as acyl-adenylate (-COAMP), then the persulfide sulfur on the catalytic cysteine is transferred to URM1 to form thiocarboxylation (-COSH) of its C-terminus. The reaction probably involves hydrogen sulfide that is generated from the persulfide intermediate and that acts as a nucleophile towards URM1. Subsequently, a transient disulfide bond is formed. Does not use thiosulfate as sulfur donor; NFS1 probably acting as a sulfur donor for thiocarboxylation reactions. Prior mcm(5) tRNA modification by the elongator complex is required for 2-thiolation. May also be involved in protein urmylation. This chain is Adenylyltransferase and sulfurtransferase UBA4, found in Candida albicans (strain SC5314 / ATCC MYA-2876) (Yeast).